Consider the following 409-residue polypeptide: Multifunctional CCA protein (409 aa).

ATP is bound by residues Gly-8 and Arg-11. The CTP site is built by Gly-8 and Arg-11. Mg(2+)-binding residues include Asp-21 and Asp-23. ATP contacts are provided by Arg-91, Arg-137, and Arg-140. Arg-91, Arg-137, and Arg-140 together coordinate CTP. The region spanning 228-329 is the HD domain; the sequence is TGVHVLSVLE…LELLQSFDVY (102 aa).

This sequence belongs to the tRNA nucleotidyltransferase/poly(A) polymerase family. Bacterial CCA-adding enzyme type 1 subfamily. Monomer. Can also form homodimers and oligomers. Requires Mg(2+) as cofactor. Ni(2+) is required as a cofactor.

It catalyses the reaction a tRNA precursor + 2 CTP + ATP = a tRNA with a 3' CCA end + 3 diphosphate. It carries out the reaction a tRNA with a 3' CCA end + 2 CTP + ATP = a tRNA with a 3' CCACCA end + 3 diphosphate. Catalyzes the addition and repair of the essential 3'-terminal CCA sequence in tRNAs without using a nucleic acid template. Adds these three nucleotides in the order of C, C, and A to the tRNA nucleotide-73, using CTP and ATP as substrates and producing inorganic pyrophosphate. tRNA 3'-terminal CCA addition is required both for tRNA processing and repair. Also involved in tRNA surveillance by mediating tandem CCA addition to generate a CCACCA at the 3' terminus of unstable tRNAs. While stable tRNAs receive only 3'-terminal CCA, unstable tRNAs are marked with CCACCA and rapidly degraded. The sequence is that of Multifunctional CCA protein from Pseudomonas savastanoi pv. phaseolicola (strain 1448A / Race 6) (Pseudomonas syringae pv. phaseolicola (strain 1448A / Race 6)).